Here is an 849-residue protein sequence, read N- to C-terminus: A-kinase anchor protein 4 (849 aa).

Positions 1-188 (MIAYCGTTTM…MAASKNTNNN (188 aa)) are excised as a propeptide. A phosphoserine mark is found at S96, S130, S190, and S204. Over residues 183–205 (KNTNNNQSPSNPATKSPSNQRSV) the composition is skewed to polar residues. The interval 183–210 (KNTNNNQSPSNPATKSPSNQRSVATPEG) is disordered. T207 carries the phosphothreonine modification. Phosphoserine occurs at positions 213, 226, and 271. The segment at 219-232 (FYVNRLSSLVIQMA) is PKA-RI and PKA-RII subunit binding domain. Y301 is subject to Phosphotyrosine. Phosphoserine is present on residues S302, S341, S431, S442, S444, S463, S492, S497, and S504. The PKA-RI-alpha subunit binding domain stretch occupies residues 335–344 (YANQVASDMM). Residue T506 is modified to Phosphothreonine. S538 carries the phosphoserine modification. Phosphoserine; by STK33 is present on S583. A phosphoserine mark is found at S628, S633, S652, and S702.

Belongs to the AKAP110 family. Interacts with PRKAR1A and PRKAR2A. Interacts with ENO4. Interacts with QRICH2. Phosphorylated by STK33 during sperm flagella assembly. In terms of tissue distribution, expressed in the fibrous sheath of spermatozoa (at protein level). Expressed in step 1 to step 6 spermatids, abundance then increases during steps 8 to 12, abundance decreases thereafter.

It is found in the cell projection. It localises to the cilium. Its subcellular location is the flagellum. Major structural component of sperm fibrous sheath. Plays a role in sperm motility. The protein is A-kinase anchor protein 4 of Mus musculus (Mouse).